The primary structure comprises 380 residues: Kappa-type opioid receptor (380 aa).

The Extracellular portion of the chain corresponds to 1–57 (MEPPVQIFRGEPGPTCSPSTCLPPNGSGWFPGWAEPDGNGSAGSEDVLLEPAHISPV). 2 N-linked (GlcNAc...) asparagine glycosylation sites follow: asparagine 25 and asparagine 39. A helical membrane pass occupies residues 58–85 (ILVIITAVYSVVFVVGLVGNSLVMFVII). The Cytoplasmic segment spans residues 86-95 (RYTKMKTATN). The chain crosses the membrane as a helical span at residues 96-119 (IYIFNLALADALVTTTMPFQSTVY). Topologically, residues 120–132 (LMNSWPFGDVLCK) are extracellular. A disulfide bridge links cysteine 131 with cysteine 210. The chain crosses the membrane as a helical span at residues 133–154 (VVISIDYYNMFTSIFTLTMMSV). Over 155–173 (DRYIAVCHPVKALDFRTPL) the chain is Cytoplasmic. The chain crosses the membrane as a helical span at residues 174 to 196 (KAKIINICIWILSSSVGISAIVL). Residues 197-222 (GGTKVREDMEVIECSLQFPDDDYSWW) are Extracellular-facing. Residues 223–247 (DLFMKVCVFVFAFVIPVLIIIVCYT) form a helical membrane-spanning segment. Over 248–274 (LMILRLKSVRLLSGSREKDRNLRRITR) the chain is Cytoplasmic. A helical membrane pass occupies residues 275–296 (LVLVVVAVFVVCWTPIHIFILV). The Extracellular segment spans residues 297–311 (EALGSTAHSTAALSS). The chain crosses the membrane as a helical span at residues 312–333 (YYFCIALGYTNSSLNPILYAFL). Topologically, residues 334-380 (DENFKRCFRDFCFPIKMRMERQSTSRVRNTVQDPAYVREVDGVNKPV) are cytoplasmic. Cysteine 345 carries the S-palmitoyl cysteine lipid modification.

Belongs to the G-protein coupled receptor 1 family. In terms of assembly, interacts with NHERF1. Interacts with GABARAPL1.

The protein localises to the cell membrane. Its function is as follows. G-protein coupled opioid receptor that functions as a receptor for endogenous alpha-neoendorphins and dynorphins, but has low affinity for beta-endorphins. Also functions as a receptor for various synthetic opioids and for the psychoactive diterpene salvinorin A. Ligand binding causes a conformation change that triggers signaling via guanine nucleotide-binding proteins (G proteins) and modulates the activity of down-stream effectors, such as adenylate cyclase. Signaling leads to the inhibition of adenylate cyclase activity. Inhibits neurotransmitter release by reducing calcium ion currents and increasing potassium ion conductance. Plays a role in the perception of pain. Plays a role in mediating reduced physical activity upon treatment with synthetic opioids. Plays a role in the regulation of salivation in response to synthetic opioids. May play a role in arousal and regulation of autonomic and neuroendocrine functions. This is Kappa-type opioid receptor (OPRK1) from Bos taurus (Bovine).